We begin with the raw amino-acid sequence, 447 residues long: Tubulin beta chain (447 aa).

GTP is bound by residues Gln11, Glu69, Ser138, Gly142, Thr143, Gly144, Asn204, and Asn226. Position 69 (Glu69) interacts with Mg(2+). The interval 424–447 is disordered; the sequence is QYQEASVSEGEEEYDEEAPLEGEE. Acidic residues predominate over residues 432–447; that stretch reads EGEEEYDEEAPLEGEE.

This sequence belongs to the tubulin family. Dimer of alpha and beta chains. A typical microtubule is a hollow water-filled tube with an outer diameter of 25 nm and an inner diameter of 15 nM. Alpha-beta heterodimers associate head-to-tail to form protofilaments running lengthwise along the microtubule wall with the beta-tubulin subunit facing the microtubule plus end conferring a structural polarity. Microtubules usually have 13 protofilaments but different protofilament numbers can be found in some organisms and specialized cells. Requires Mg(2+) as cofactor.

It localises to the cytoplasm. Its subcellular location is the cytoskeleton. Tubulin is the major constituent of microtubules, a cylinder consisting of laterally associated linear protofilaments composed of alpha- and beta-tubulin heterodimers. Microtubules grow by the addition of GTP-tubulin dimers to the microtubule end, where a stabilizing cap forms. Below the cap, tubulin dimers are in GDP-bound state, owing to GTPase activity of alpha-tubulin. The polypeptide is Tubulin beta chain (TUB1) (Cercospora beticola (Sugarbeet leaf spot fungus)).